A 746-amino-acid polypeptide reads, in one-letter code: Zinc finger protein 366 (746 aa).

The tract at residues Met-1–Leu-64 is disordered. 11 consecutive C2H2-type zinc fingers follow at residues Trp-250 to His-272, His-278 to His-300, His-306 to His-328, His-334 to His-356, Asn-362 to His-384, Tyr-390 to His-412, Tyr-418 to His-440, His-446 to His-468, Tyr-474 to His-496, Phe-502 to His-524, and Phe-530 to His-553. Positions Gly-452 to Ile-746 are interaction with NRIP1. The PXDLS motif lies at Pro-587–Ser-591. The interval Pro-587–Glu-689 is disordered. Residues Cys-613–Tyr-627 show a composition bias toward acidic residues. A compositionally biased stretch (basic and acidic residues) spans Glu-675–Glu-689.

As to quaternary structure, interacts with ESR1 and NRIP1. Interacts (via PXDLS motif) with CTBP1. Expressed in immature and mature dendritic cells (DCs).

It is found in the nucleus. Has transcriptional repression activity. Acts as a corepressor of ESR1; the function seems to involve CTBP1 and histone deacetylases. The polypeptide is Zinc finger protein 366 (Mus musculus (Mouse)).